Reading from the N-terminus, the 119-residue chain is Nascent polypeptide-associated complex protein (119 aa).

One can recognise an NAC-A/B domain in the interval 5-73 (RMNSREMRRL…FRETPKKQEG (69 aa)).

Belongs to the NAC-alpha family. In terms of assembly, homodimer. Interacts with the ribosome. Binds ribosomal RNA.

Contacts the emerging nascent chain on the ribosome. The sequence is that of Nascent polypeptide-associated complex protein from Thermoplasma volcanium (strain ATCC 51530 / DSM 4299 / JCM 9571 / NBRC 15438 / GSS1).